Here is a 165-residue protein sequence, read N- to C-terminus: Large ribosomal subunit protein uL11 (165 aa).

Serine 38 is subject to Phosphoserine. Residue lysine 40 forms a Glycyl lysine isopeptide (Lys-Gly) (interchain with G-Cter in SUMO2) linkage. Lysine 48 is covalently cross-linked (Glycyl lysine isopeptide (Lys-Gly) (interchain with G-Cter in ubiquitin)). At lysine 54 the chain carries N6-acetyllysine. Residue lysine 83 forms a Glycyl lysine isopeptide (Lys-Gly) (interchain with G-Cter in ubiquitin) linkage. Serine 165 bears the Phosphoserine mark.

It belongs to the universal ribosomal protein uL11 family. As to quaternary structure, component of the large ribosomal subunit. Mature ribosomes consist of a small (40S) and a large (60S) subunit. The 40S subunit contains about 33 different proteins and 1 molecule of RNA (18S). The 60S subunit contains about 49 different proteins and 3 molecules of RNA (28S, 5.8S and 5S). In terms of processing, ubiquitinated at Lys-48 and Lys-83 by RNF14 and RNF25 in response to ribosome collisions (ribosome stalling).

It localises to the cytoplasm. Component of the large ribosomal subunit. The ribosome is a large ribonucleoprotein complex responsible for the synthesis of proteins in the cell. Binds directly to 26S ribosomal RNA. The sequence is that of Large ribosomal subunit protein uL11 (RPL12) from Chinchilla lanigera (Long-tailed chinchilla).